Here is a 564-residue protein sequence, read N- to C-terminus: Agglutinin (564 aa).

The signal sequence occupies residues 1–24 (MYAVATWLCFGSTSGWSFTLEDNN). 32-34 (IIN) is a binding site for beta-D-galactose. A glycan (N-linked (GlcNAc...) asparagine) is linked at N34. Residues Y104, Y147, E200, and R203 contribute to the active site. Residues 104–105 (YV) and 145–147 (GNY) each bind AMP. The N-linked (GlcNAc...) asparagine glycan is linked to N259. Cysteines 282 and 306 form a disulfide. The propeptide at 291–302 (SLLIRPVVPNFN) is linker peptide. The Ricin B-type lectin 1 domain maps to 309-436 (PEPIVRIVGR…YAVSQGWLPT (128 aa)). Residues I312, 324–328 (DVTGE), Q337, K342, and N348 contribute to the beta-D-galactose site. The stretch at 319 to 361 (NGLCVDVTGEEFFDGNPIQLWPCKSNTDWNQLWTLRKDSTIRS) is one 1-alpha repeat. A disulfide bond links C322 and C341. One copy of the 1-beta repeat lies at 362–402 (NGKCLTISKSSPRQQVVIYNCSTATVGATRWQIWDNRTIIN). Residues C365 and C382 are joined by a disulfide bond. N-linked (GlcNAc...) asparagine glycans are attached at residues N397 and N437. A 1-gamma repeat occupies 405–437 (SGLVLAATSGNSGTKLTVQTNIYAVSQGWLPTN). Residue N437 participates in beta-D-galactose binding. In terms of domain architecture, Ricin B-type lectin 2 spans 439–563 (TQPFVTTIVG…GNLNQIWLPL (125 aa)). A 2-alpha repeat occupies 450–485 (YGMCLQANSGKVWLEDCTSEKAEQQWALYADGSIRP). 2 disulfide bridges follow: C453/C466 and C492/C509. A 2-beta repeat occupies 489–528 (RDNCLTTDANIKGTVVKILSCGPASSGQRWMFKNDGTILN). One copy of the 2-gamma repeat lies at 531 to 558 (NGLVLDVRRSDPSLKQIIVHPFHGNLNQ).

It in the N-terminal section; belongs to the ribosome-inactivating protein family. Type 2 RIP subfamily.

It catalyses the reaction Endohydrolysis of the N-glycosidic bond at one specific adenosine on the 28S rRNA.. This chain is Agglutinin, found in Ricinus communis (Castor bean).